Consider the following 133-residue polypeptide: ATP synthase epsilon chain (133 aa).

Residues 103–133 (VSQMEGQEPSTEKIKAQQNFNRARARVQATK) are disordered.

Belongs to the ATPase epsilon chain family. F-type ATPases have 2 components, CF(1) - the catalytic core - and CF(0) - the membrane proton channel. CF(1) has five subunits: alpha(3), beta(3), gamma(1), delta(1), epsilon(1). CF(0) has three main subunits: a, b and c.

The protein resides in the cellular thylakoid membrane. Functionally, produces ATP from ADP in the presence of a proton gradient across the membrane. The protein is ATP synthase epsilon chain of Prochlorococcus marinus (strain MIT 9313).